Here is a 128-residue protein sequence, read N- to C-terminus: Prokineticin-2 (128 aa).

An N-terminal signal peptide occupies residues 1–27 (MRSSRCARLLLLLLLPPLLLTPPAGDA). Disulfide bonds link cysteine 34–cysteine 46, cysteine 40–cysteine 58, cysteine 45–cysteine 106, cysteine 68–cysteine 114, and cysteine 108–cysteine 124. The disordered stretch occupies residues 71–95 (MTRKNHFGNGRQERRKRKRRRKKKV). Over residues 83-95 (ERRKRKRRRKKKV) the composition is skewed to basic residues.

It belongs to the AVIT (prokineticin) family.

It localises to the secreted. In terms of biological role, may function as an output molecule from the suprachiasmatic nucleus (SCN) that transmits behavioral circadian rhythm. May also function locally within the SCN to synchronize output. Potently contracts gastrointestinal (GI) smooth muscle. The sequence is that of Prokineticin-2 (PROK2) from Bos taurus (Bovine).